The chain runs to 765 residues: 1,4-alpha-glucan branching enzyme GlgB (765 aa).

Asp-431 functions as the Nucleophile in the catalytic mechanism. Catalysis depends on Glu-484, which acts as the Proton donor.

It belongs to the glycosyl hydrolase 13 family. GlgB subfamily. In terms of assembly, monomer.

The enzyme catalyses Transfers a segment of a (1-&gt;4)-alpha-D-glucan chain to a primary hydroxy group in a similar glucan chain.. It functions in the pathway glycan biosynthesis; glycogen biosynthesis. In terms of biological role, catalyzes the formation of the alpha-1,6-glucosidic linkages in glycogen by scission of a 1,4-alpha-linked oligosaccharide from growing alpha-1,4-glucan chains and the subsequent attachment of the oligosaccharide to the alpha-1,6 position. The protein is 1,4-alpha-glucan branching enzyme GlgB of Synechococcus sp. (strain CC9311).